The primary structure comprises 129 residues: RxLR effector protein PexRD43 (129 aa).

A signal peptide spans 1–16 (MRLAMILLSIPLFVSG). The short motif at 44–56 (RSLRTSGEANEER) is the RxLR-dEER element.

Belongs to the RxLR effector family.

Its subcellular location is the secreted. It is found in the host cytoplasm. The protein resides in the host nucleus. Functionally, effector that enhances P.infestans colonization of Nicotiana benthamiana leaves. The sequence is that of RxLR effector protein PexRD43 from Phytophthora infestans (strain T30-4) (Potato late blight agent).